The following is a 722-amino-acid chain: Golgin subfamily A member 5 (722 aa).

Residues 1–689 (MSWFTDLAGR…IFLRRYPIAR (689 aa)) are Cytoplasmic-facing. 2 disordered regions span residues 90–158 (TRSS…VKPI) and 194–215 (TLSDSGSSASLSTTGDPKSHEL). The segment covering 91 to 109 (RSSIESSHNSSVNVSSHRS) has biased composition (low complexity). Residues 134-148 (DKVHSSSQKETRKES) are compositionally biased toward basic and acidic residues. Residues 149–158 (ASVNQAVKPI) show a composition bias toward polar residues. Residues 195-209 (LSDSGSSASLSTTGD) are compositionally biased toward low complexity. Positions 211-622 (KSHELSNLRL…LEHQLKNVQG (412 aa)) form a coiled coil. A helical; Anchor for type IV membrane protein membrane pass occupies residues 690 to 710 (VFIIIYMALLHLWVMIVLLTY). Residues 711 to 722 (TPEMHHDTPSGK) are Lumenal-facing.

It localises to the golgi apparatus membrane. Involved in maintaining Golgi structure. Stimulates the formation of Golgi stacks and ribbons. Involved in intra-Golgi retrograde transport. The polypeptide is Golgin subfamily A member 5 (golga5) (Xenopus laevis (African clawed frog)).